Consider the following 73-residue polypeptide: Small ribosomal subunit protein bS18 (73 aa).

It belongs to the bacterial ribosomal protein bS18 family. Part of the 30S ribosomal subunit. Forms a tight heterodimer with protein bS6.

Its function is as follows. Binds as a heterodimer with protein bS6 to the central domain of the 16S rRNA, where it helps stabilize the platform of the 30S subunit. The protein is Small ribosomal subunit protein bS18 of Synechococcus sp. (strain WH7803).